Consider the following 478-residue polypeptide: Lipoprotein lipase (478 aa).

A signal peptide spans 1-27 (MESKALLLVALSVWLQSLIVSREGLAT). An interaction with GPIHBP1 region spans residues 35–56 (RDFTDIESKFALRTPEDTVEDT). A disulfide bridge connects residues cysteine 57 and cysteine 70. N-linked (GlcNAc...) asparagine glycosylation is present at asparagine 73. Tyrosine 124 bears the 3'-nitrotyrosine mark. Residue serine 162 is the Nucleophile of the active site. The active-site Charge relay system is the aspartate 186. Tyrosine 194 is modified (3'-nitrotyrosine). Residues alanine 197, arginine 200, serine 202, and aspartate 205 each coordinate Ca(2+). Cysteine 246 and cysteine 269 are joined by a disulfide. The tract at residues 246–269 (CNIGEAIRVIAERGLGDVDQLVKC) is essential for determining substrate specificity. The Charge relay system role is filled by histidine 271. Intrachain disulfides connect cysteine 294–cysteine 313 and cysteine 305–cysteine 308. The PLAT domain occupies 344–467 (FHYQVKMRFS…KGKSSVVFVK (124 aa)). Tyrosine 346 is modified (3'-nitrotyrosine). A glycan (N-linked (GlcNAc...) asparagine) is linked at asparagine 389. Positions 420-424 (WSNWW) are important for interaction with lipoprotein particles. An important for heparin binding region spans residues 433 to 437 (KIRVK). The segment at 446–470 (IFCSREKKSHLQKGKSSVVFVKCHD) is interaction with GPIHBP1. Residues cysteine 448 and cysteine 468 are joined by a disulfide bond.

The protein belongs to the AB hydrolase superfamily. Lipase family. As to quaternary structure, homodimer. Interacts with GPIHBP1 with 1:1 stoichiometry. Interacts with APOC2; the interaction activates LPL activity in the presence of lipids. Interaction with heparan sulfate proteoglycans is required to protect LPL against loss of activity. Associates with lipoprotein particles in blood plasma. Interacts with LMF1 and SEL1L; interaction with SEL1L is required to prevent aggregation of newly synthesized LPL in the endoplasmic reticulum (ER), and for normal export of LPL from the ER to the extracellular space. Interacts with SORL1; SORL1 acts as a sorting receptor, promoting LPL localization to endosomes and later to lysosomes, leading to degradation of newly synthesized LPL. In terms of processing, tyrosine nitration after lipopolysaccharide (LPS) challenge down-regulates the lipase activity.

The protein resides in the cell membrane. The protein localises to the secreted. It localises to the extracellular space. Its subcellular location is the extracellular matrix. It catalyses the reaction a triacylglycerol + H2O = a diacylglycerol + a fatty acid + H(+). The enzyme catalyses a 1,2-diacyl-sn-glycero-3-phosphocholine + H2O = a 2-acyl-sn-glycero-3-phosphocholine + a fatty acid + H(+). It carries out the reaction 1,2,3-tri-(9Z-octadecenoyl)-glycerol + H2O = di-(9Z)-octadecenoylglycerol + (9Z)-octadecenoate + H(+). The catalysed reaction is 1,2-di-(9Z-octadecenoyl)-sn-glycero-3-phosphocholine + H2O = (9Z-octadecenoyl)-sn-glycero-3-phosphocholine + (9Z)-octadecenoate + H(+). It catalyses the reaction 1,2,3-tributanoylglycerol + H2O = dibutanoylglycerol + butanoate + H(+). The enzyme catalyses 1,2-dihexadecanoyl-sn-glycero-3-phosphocholine + H2O = hexadecanoyl-sn-glycero-3-phosphocholine + hexadecanoate + H(+). With respect to regulation, the apolipoprotein APOC2 acts as a coactivator of LPL activity. Ca(2+) binding promotes protein stability and formation of the active homodimer. Interaction with GPIHBP1 protects LPL against inactivation by ANGPTL4. Functionally, key enzyme in triglyceride metabolism. Catalyzes the hydrolysis of triglycerides from circulating chylomicrons and very low density lipoproteins (VLDL), and thereby plays an important role in lipid clearance from the blood stream, lipid utilization and storage. Although it has both phospholipase and triglyceride lipase activities it is primarily a triglyceride lipase with low but detectable phospholipase activity. Mediates margination of triglyceride-rich lipoprotein particles in capillaries. Recruited to its site of action on the luminal surface of vascular endothelium by binding to GPIHBP1 and cell surface heparan sulfate proteoglycans. The sequence is that of Lipoprotein lipase (LPL) from Sus scrofa (Pig).